Reading from the N-terminus, the 356-residue chain is Dual-specificity RNA methyltransferase RlmN (356 aa).

Glu-92 acts as the Proton acceptor in catalysis. One can recognise a Radical SAM core domain in the interval 98-334 (EKDRGTLCIS…MRRTRGEDID (237 aa)). A disulfide bond links Cys-105 and Cys-337. The [4Fe-4S] cluster site is built by Cys-112, Cys-116, and Cys-119. S-adenosyl-L-methionine contacts are provided by residues 162–163 (GE), Ser-194, 216–218 (SLH), and Asn-294. Residue Cys-337 is the S-methylcysteine intermediate of the active site.

Belongs to the radical SAM superfamily. RlmN family. Requires [4Fe-4S] cluster as cofactor.

Its subcellular location is the cytoplasm. It catalyses the reaction adenosine(2503) in 23S rRNA + 2 reduced [2Fe-2S]-[ferredoxin] + 2 S-adenosyl-L-methionine = 2-methyladenosine(2503) in 23S rRNA + 5'-deoxyadenosine + L-methionine + 2 oxidized [2Fe-2S]-[ferredoxin] + S-adenosyl-L-homocysteine. The enzyme catalyses adenosine(37) in tRNA + 2 reduced [2Fe-2S]-[ferredoxin] + 2 S-adenosyl-L-methionine = 2-methyladenosine(37) in tRNA + 5'-deoxyadenosine + L-methionine + 2 oxidized [2Fe-2S]-[ferredoxin] + S-adenosyl-L-homocysteine. Its function is as follows. Specifically methylates position 2 of adenine 2503 in 23S rRNA and position 2 of adenine 37 in tRNAs. m2A2503 modification seems to play a crucial role in the proofreading step occurring at the peptidyl transferase center and thus would serve to optimize ribosomal fidelity. The chain is Dual-specificity RNA methyltransferase RlmN from Vesicomyosocius okutanii subsp. Calyptogena okutanii (strain HA).